The sequence spans 655 residues: Protein npp-24 (655 aa).

A helical membrane pass occupies residues 263-283; sequence ICSVFVLVSGGGVLSHLVVFP.

It is found in the membrane. This Caenorhabditis elegans protein is Protein npp-24.